The sequence spans 322 residues: uncharacterized protein (322 aa).

5 helical membrane passes run Gly159–Leu179, Met203–Leu223, Gly234–Leu254, Phe267–Tyr287, and Thr296–Trp316.

Its subcellular location is the membrane. This is an uncharacterized protein from Dictyostelium discoideum (Social amoeba).